A 586-amino-acid chain; its full sequence is Ezrin (586 aa).

The region spanning 2–295 (PKPINVRVTT…GNHELYMRRR (294 aa)) is the FERM domain. At Lys-60 the chain carries N6-acetyllysine. The [IL]-x-C-x-x-[DE] motif motif lies at 115–120 (IYCPPE). At Tyr-146 the chain carries Phosphotyrosine; by PDGFR. The segment at 244–586 (EIRNISFNDK…KQRIDEFEAM (343 aa)) is interaction with SCYL3. A coiled-coil region spans residues 302 to 462 (VQQMKAQARE…QDDLVKTKEE (161 aa)). Residues 305 to 340 (MKAQAREEKHQKQLERQQLESEKKRREAVEQEKEQM) are disordered. A compositionally biased stretch (basic and acidic residues) spans 308-340 (QAREEKHQKQLERQQLESEKKRREAVEQEKEQM). A Phosphotyrosine; by PDGFR modification is found at Tyr-354. Phosphoserine is present on Ser-366. Position 478 is a phosphotyrosine (Tyr-478). Phosphoserine is present on Ser-535. Thr-567 carries the phosphothreonine; by ROCK2 and PKC/PRKCI modification.

In terms of assembly, interacts with PALS1. Found in a complex with EZR, PODXL and NHERF2. Interacts with MCC, PLEKHG6, PODXL, SCYL3/PACE1, NHERF1, NHERF2 and TMEM8B. Interacts (when phosphorylated) with FES/FPS. Interacts with dimeric S100P, the interaction may be activating through unmasking of F-actin binding sites. Identified in complexes that contain VIM, EZR, AHNAK, BFSP1, BFSP2, ANK2, PLEC, PRX and spectrin. Detected in a complex composed of at least EZR, AHNAK, PPL and PRX. Interacts with PDPN (via cytoplasmic domain); activates RHOA and promotes epithelial-mesenchymal transition. Interacts with SPN/CD43 cytoplasmic tail, CD44 and ICAM2. Interacts with SLC9A3; interaction targets SLC9A3 to the apical membrane. Interacts with SLC9A1; regulates interactions of SLC9A1 with cytoskeletal and promotes stress fiber formation. Interacts with CLIC5; may work together in a complex which also includes RDX and MYO6 to stabilize linkages between the plasma membrane and subjacent actin cytoskeleton at the base of stereocilia. Post-translationally, phosphorylated by tyrosine-protein kinases. Phosphorylation by ROCK2 suppresses the head-to-tail association of the N-terminal and C-terminal halves resulting in an opened conformation which is capable of actin and membrane-binding. S-nitrosylation is induced by interferon-gamma and oxidatively-modified low-densitity lipoprotein (LDL(ox)) possibly implicating the iNOS-S100A8/9 transnitrosylase complex.

The protein resides in the apical cell membrane. It localises to the cell projection. Its subcellular location is the microvillus membrane. The protein localises to the ruffle membrane. It is found in the cytoplasm. The protein resides in the cell cortex. It localises to the cytoskeleton. Its subcellular location is the microvillus. With respect to regulation, a head-to-tail association, of the N-terminal and C-terminal halves results in a closed conformation (inactive form) which is incapable of actin or membrane-binding. Probably involved in connections of major cytoskeletal structures to the plasma membrane. In epithelial cells, required for the formation of microvilli and membrane ruffles on the apical pole. Along with PLEKHG6, required for normal macropinocytosis. The protein is Ezrin (EZR) of Oryctolagus cuniculus (Rabbit).